A 190-amino-acid chain; its full sequence is 6,7-dimethyl-8-ribityllumazine synthase (190 aa).

Residues Phe-23, 61–63, and 85–87 each bind 5-amino-6-(D-ribitylamino)uracil; these read SFE and AVI. 90-91 provides a ligand contact to (2S)-2-hydroxy-3-oxobutyl phosphate; it reads QT. His-93 serves as the catalytic Proton donor. Phe-118 is a 5-amino-6-(D-ribitylamino)uracil binding site. (2S)-2-hydroxy-3-oxobutyl phosphate is bound at residue Arg-132.

Belongs to the DMRL synthase family.

The enzyme catalyses (2S)-2-hydroxy-3-oxobutyl phosphate + 5-amino-6-(D-ribitylamino)uracil = 6,7-dimethyl-8-(1-D-ribityl)lumazine + phosphate + 2 H2O + H(+). Its pathway is cofactor biosynthesis; riboflavin biosynthesis; riboflavin from 2-hydroxy-3-oxobutyl phosphate and 5-amino-6-(D-ribitylamino)uracil: step 1/2. In terms of biological role, catalyzes the formation of 6,7-dimethyl-8-ribityllumazine by condensation of 5-amino-6-(D-ribitylamino)uracil with 3,4-dihydroxy-2-butanone 4-phosphate. This is the penultimate step in the biosynthesis of riboflavin. In Trichormus variabilis (strain ATCC 29413 / PCC 7937) (Anabaena variabilis), this protein is 6,7-dimethyl-8-ribityllumazine synthase.